Here is an 88-residue protein sequence, read N- to C-terminus: Putative cancer susceptibility gene HEPN1 protein (88 aa).

In terms of tissue distribution, expressed in liver. Expression is either down-regulated or lost in hepatocellular carcinomas (HCC).

The protein resides in the cytoplasm. This chain is Putative cancer susceptibility gene HEPN1 protein (HEPN1), found in Homo sapiens (Human).